The sequence spans 686 residues: Protein-glutamine gamma-glutamyltransferase 2 (686 aa).

Ala2 carries the N-acetylalanine modification. Intrachain disulfides connect Cys230–Cys370 and Cys370–Cys371. Active-site residues include Cys277, His335, and Asp358. Ca(2+) contacts are provided by Asn398, Asp400, Glu437, Glu447, and Glu452. Lys468 bears the N6-acetyllysine mark. GTP is bound at residue 476–483; the sequence is RIRVGDSM. Glu538 is a Ca(2+) binding site. Residue 579–582 participates in GTP binding; that stretch reads RDLY. Gln632 is covalently cross-linked (Isoglutamyl lysine isopeptide (Gln-Lys) (interchain with K-?)).

This sequence belongs to the transglutaminase superfamily. Transglutaminase family. In terms of assembly, monomer. Interacts with phospholipase C; promoting alpha-1 adrenergic receptor signaling. Interacts with PLCD1. Requires Ca(2+) as cofactor. In terms of processing, disulfide bond formation inactivates the calcium-dependent acyltransferase activity. Cys-370 can form disulfide bonds with both Cys-230 and Cys-371: formation of a disulfide bond between Cys-230 and Cys-370 facilitates formation of the disulfide between Cys-370 and Cys-371, which promotes inactivation of the acyltransferase activity. May also form interchain disulfids between Cys-230 and Cys-370. Ca(2+) protects against disulfide bond formation and inactivation. Auto-transglutaminated: Forms covalent cross-links mediated by transglutaminase between Gln-632 and the epsilon-amino group of a lysine residue of itself or HMGB1, forming homopolymers and heteropolymers, respectively. Post-translationally, S-nitrosylated, leading to inactivation of the acyltransferase activity.

It localises to the cytoplasm. The protein resides in the cytosol. It is found in the nucleus. The protein localises to the chromosome. Its subcellular location is the secreted. It localises to the extracellular space. The protein resides in the extracellular matrix. It is found in the cell membrane. The protein localises to the mitochondrion. The enzyme catalyses L-glutaminyl-[protein] + L-lysyl-[protein] = [protein]-L-lysyl-N(6)-5-L-glutamyl-[protein] + NH4(+). It carries out the reaction L-glutaminyl-[protein] + serotonin = 5-serotonyl-L-glutamyl-[protein] + NH4(+). It catalyses the reaction L-glutaminyl-[protein] + dopamine = 5-dopaminyl-L-glutamyl-[protein] + NH4(+). The catalysed reaction is L-glutaminyl-[protein] + histamine = 5-histaminyl-L-glutamyl-[protein] + NH4(+). The enzyme catalyses L-glutaminyl-[protein] + (R)-noradrenaline = 5-(R)-noradrenalinyl-L-glutamyl-[protein] + NH4(+). It carries out the reaction L-glutaminyl-[protein] + H2O = L-glutamyl-[protein] + NH4(+). Its activity is regulated as follows. Acyltransferase activity is regulated by the binding of GTP and Ca(2+): inactivated by GTP, which stabilizes its closed structure, thereby obstructing the accessibility of substrates to the active sites. In contrast, Ca(2+) acts as a cofactor by inducing conformational change to the active open form. In absence of Ca(2+), Mg(2+) may bind Ca(2+)-binding sites, promoting GTP-binding and subsequent inhibition of the acyltransferase activity. Extracellularly reduced and activated by CLIC3. In terms of biological role, calcium-dependent acyltransferase that catalyzes the formation of covalent bonds between peptide-bound glutamine and various primary amines, such as gamma-amino group of peptide-bound lysine, or mono- and polyamines, thereby producing cross-linked or aminated proteins, respectively. Involved in many biological processes, such as bone development, angiogenesis, wound healing, cellular differentiation, chromatin modification and apoptosis. Acts as a protein-glutamine gamma-glutamyltransferase by mediating the cross-linking of proteins, such as ACO2, HSPB6, FN1, HMGB1, RAP1GDS1, SLC25A4/ANT1, SPP1 and WDR54. Under physiological conditions, the protein cross-linking activity is inhibited by GTP; inhibition is relieved by Ca(2+) in response to various stresses. When secreted, catalyzes cross-linking of proteins of the extracellular matrix, such as FN1 and SPP1 resulting in the formation of scaffolds. Plays a key role during apoptosis, both by (1) promoting the cross-linking of cytoskeletal proteins resulting in condensation of the cytoplasm, and by (2) mediating cross-linking proteins of the extracellular matrix, resulting in the irreversible formation of scaffolds that stabilize the integrity of the dying cells before their clearance by phagocytosis, thereby preventing the leakage of harmful intracellular components. In addition to protein cross-linking, can use different monoamine substrates to catalyze a vast array of protein post-translational modifications: mediates aminylation of serotonin, dopamine, noradrenaline or histamine into glutamine residues of target proteins to generate protein serotonylation, dopaminylation, noradrenalinylation or histaminylation, respectively. Mediates protein serotonylation of small GTPases during activation and aggregation of platelets, leading to constitutive activation of these GTPases. Plays a key role in chromatin organization by mediating serotonylation and dopaminylation of histone H3. Catalyzes serotonylation of 'Gln-5' of histone H3 (H3Q5ser) during serotonergic neuron differentiation, thereby facilitating transcription. Acts as a mediator of neurotransmission-independent role of nuclear dopamine in ventral tegmental area (VTA) neurons: catalyzes dopaminylation of 'Gln-5' of histone H3 (H3Q5dop), thereby regulating relapse-related transcriptional plasticity in the reward system. Regulates vein remodeling by mediating serotonylation and subsequent inactivation of ATP2A2/SERCA2. Also acts as a protein deamidase by mediating the side chain deamidation of specific glutamine residues of proteins to glutamate. Catalyzes specific deamidation of protein gliadin, a component of wheat gluten in the diet. May also act as an isopeptidase cleaving the previously formed cross-links. Also able to participate in signaling pathways independently of its acyltransferase activity: acts as a signal transducer in alpha-1 adrenergic receptor-mediated stimulation of phospholipase C-delta (PLCD) activity and is required for coupling alpha-1 adrenergic agonists to the stimulation of phosphoinositide lipid metabolism. The polypeptide is Protein-glutamine gamma-glutamyltransferase 2 (Mus musculus (Mouse)).